The primary structure comprises 174 residues: uncharacterized protein (174 aa).

Transmembrane regions (helical) follow at residues 8-28 and 146-166; these read FLFIVVFLFHGFMFSVVNYVF and IVSWILYVFLLATLFLSIQFI.

The protein resides in the cell membrane. This is an uncharacterized protein from Haemophilus influenzae (strain ATCC 51907 / DSM 11121 / KW20 / Rd).